Consider the following 491-residue polypeptide: Probable cysteine proteinase 024R (491 aa).

Active-site residues include Cys132, His325, and Asn355. A helical transmembrane segment spans residues 467–487 (ALDLALLVLPALLIVIVVLIG).

It belongs to the peptidase C1 family.

The protein resides in the membrane. Probable cysteine protease. This chain is Probable cysteine proteinase 024R, found in Invertebrate iridescent virus 3 (IIV-3).